The following is a 1752-amino-acid chain: MSGIQFSPSSVPLRRVEEVQFGILSPEEIRSMSVAKIEFPETMDESGQRPRVGGLLDPRLGTIDRQFKCQTCGETMADCPGHFGHIELAKPVFHIGFLSKIKKILECVCWNCGKLKIDSSNPKFNDTQRYRDPKNRLNAVWNVCKTKMVCDTGLSAGSDNFDLSNPSANMGHGGCGAAQPTIRKDGLRLWGSWKRGKDESDLPEKRLLSPLEVHTIFTHISSEDLAHLGLNEQYARPDWMIITVLPVPPPSVRPSISVDGTSRGEDDLTHKLSDIIKANANVRRCEQEGAPAHIVSEYEQLLQFHVATYMDNEIAGQPQALQKSGRPLKSIRARLKGKEGRLRGNLMGKRVDFSARTVITGDPNLSLDELGVPRSIAKTLTYPETVTPYNIYQLQELVRNGPDEHPGAKYIIRDTGERIDLRYHKRAGDIPLRYGWRVERHIRDGDVVIFNRQPSLHKMSMMGHRIRVMPYSTFRLNLSVTSPYNADFDGDEMNMHVPQSEETRAEIQEITMVPKQIVSPQSNKPVMGIVQDTLAGVRKFSLRDNFLTRNAVMNIMLWVPDWDGILPPPVILKPKVLWTGKQILSLIIPKGINLIRDDDKQSLSNPTDSGMLIENGEIIYGVVDKKTVGASQGGLVHTIWKEKGPEICKGFFNGIQRVVNYWLLHNGFSIGIGDTIADADTMKEVTRTVKEARRQVAECIQDAQHNRLKPEPGMTLRESFEAKVSRILNQARDNAGRSAEHSLKDSNNVKQMVAAGSKGSFINISQMSACVGQQIVEGKRIPFGFKYRTLPHFPKDDDSPESRGFIENSYLRGLTPQEFFFHAMAGREGLIDTAVKTAETGYIQRRLVKAMEDVMVRYDGTVRNAMGDIIQFAYGEDGLDATLVEYQVFDSLRLSTKQFEKKYRIDLMEDRSLSLYMENSIENDSSVQDLLDEEYTQLVADRELLCKFIFPKGDARWPLPVNVQRIIQNALQIFHLEAKKPTDLLPSDIINGLNELIAKLTIFRGSDRITRDVQNNATLLFQILLRSKFAVKRVIMEYRLNKVAFEWIMGEVEARFQQAVVSPGEMVGTLAAQSIGEPATQMTLNTFHYAGVSSKNVTLGVPRLKEILNVAKNIKTPSLTIYLMPWIAANMDLAKNVQTQIEHTTLSTVTSATEIHYDPDPQDTVIEEDKDFVEAFFAIPDEEVEENLYKQSPWLLRLELDRAKMLDKKLSMSDVAGKIAESFERDLFTIWSEDNADKLIIRCRIIRDDDRKAEDDDNMIEEDVFLKTIEGHMLESISLRGVPNITRVYMMEHKIVRQIEDGTFERADEWVLETDGINLTEAMTVEGVDATRTYSNSFVEILQILGIEATRSALLKELRNVIEFDGSYVNYRHLALLCDVMTSRGHLMAITRHGINRAETGALMRCSFEETVEILMDAAASGEKDDCKGISENIMLGQLAPMGTGAFDIYLDQDMLMNYSLGTAVPTLAGSGMGTSQLPEGAGTPYERSPMVDSGFVGSPDAAAFSPLVQGGSEGREGFGDYGLLGAASPYKGVQSPGYTSPFSSAMSPGYGLTSPSYSPSSPGYSTSPAYMPSSPSYSPTSPSYSPTSPSYSPTSPSYSPTSPSYSATSPSYSPTSPSYSPTSPSYSPTSPSYSPTSPSYSPTSPSYSPTSPSYSPTSPSYSPTSPSYSPTSPSYSPTSPSYSPTSPSYSPTSPSYSPTSPSYSPTSPSYSPTSPSYSPTSPSYSPTSPSYSPTSPSYSPTSPSYSPTSPS.

Residues cysteine 69, cysteine 72, cysteine 79, histidine 82, cysteine 109, cysteine 112, cysteine 150, and cysteine 175 each coordinate Zn(2+). Mg(2+) is bound by residues aspartate 487, aspartate 489, and aspartate 491. The segment at 816 to 828 (PQEFFFHAMAGRE) is bridging helix. Lysine 1252 participates in a covalent cross-link: Glycyl lysine isopeptide (Lys-Gly) (interchain with G-Cter in ubiquitin). Phosphoserine is present on residues serine 1489, serine 1499, serine 1506, and serine 1529. Tyrosine 1531 is subject to Phosphotyrosine. The segment at 1554-1752 (TSPSYSPSSP…SPSYSPTSPS (199 aa)) is disordered. 5 consecutive repeat copies span residues 1558–1564 (YSPSSPG), 1578–1584 (YSPTSPS), 1585–1591 (YSPTSPS), 1592–1598 (YSPTSPS), and 1599–1605 (YSPTSPS). The interval 1558–1752 (YSPSSPGYST…SPSYSPTSPS (195 aa)) is C-terminal domain (CTD); 26 X 7 AA approximate tandem repeats of Y-S-P-[TS]-S-P-S. One copy of the 6; approximate repeat lies at 1606-1612 (YSATSPS). 20 consecutive repeat copies span residues 1613-1619 (YSPTSPS), 1620-1626 (YSPTSPS), 1627-1633 (YSPTSPS), 1634-1640 (YSPTSPS), 1641-1647 (YSPTSPS), 1648-1654 (YSPTSPS), 1655-1661 (YSPTSPS), 1662-1668 (YSPTSPS), 1669-1675 (YSPTSPS), 1676-1682 (YSPTSPS), 1683-1689 (YSPTSPS), 1690-1696 (YSPTSPS), 1697-1703 (YSPTSPS), 1704-1710 (YSPTSPS), 1711-1717 (YSPTSPS), 1718-1724 (YSPTSPS), 1725-1731 (YSPTSPS), 1732-1738 (YSPTSPS), 1739-1745 (YSPTSPS), and 1746-1752 (YSPTSPS).

The protein belongs to the RNA polymerase beta' chain family. As to quaternary structure, component of the RNA polymerase II (Pol II) complex consisting of 12 subunits. Post-translationally, the tandem 7 residues repeats in the C-terminal domain (CTD) can be highly phosphorylated. The phosphorylation activates Pol II. Phosphorylation occurs mainly at residues 'Ser-2' and 'Ser-5' of the heptapeptide repeat. The phosphorylation state is believed to result from the balanced action of site-specific CTD kinases and phosphatase, and a 'CTD code' that specifies the position of Pol II within the transcription cycle has been proposed. Following transcription stress, the elongating form of RNA polymerase II (RNA pol IIo) is polyubiquitinated via 'Lys-63'-linkages on Lys-1252 at DNA damage sites without leading to degradation: ubiquitination promotes RNA pol IIo backtracking to allow access by the transcription-coupled nucleotide excision repair (TC-NER) machinery. Subsequent def1-dependent polyubiquitination by the elongin complex via 'Lys-48'-linkages may lead to proteasome-mediated degradation; presumably at stalled RNA pol II where TC-NER has failed, to halt global transcription and enable 'last resort' DNA repair pathways.

It localises to the nucleus. The enzyme catalyses RNA(n) + a ribonucleoside 5'-triphosphate = RNA(n+1) + diphosphate. Functionally, DNA-dependent RNA polymerase catalyzes the transcription of DNA into RNA using the four ribonucleoside triphosphates as substrates. Largest and catalytic component of RNA polymerase II which synthesizes mRNA precursors and many functional non-coding RNAs. Forms the polymerase active center together with the second largest subunit. Pol II is the central component of the basal RNA polymerase II transcription machinery. It is composed of mobile elements that move relative to each other. RPB1 is part of the core element with the central large cleft, the clamp element that moves to open and close the cleft and the jaws that are thought to grab the incoming DNA template. At the start of transcription, a single-stranded DNA template strand of the promoter is positioned within the central active site cleft of Pol II. A bridging helix emanates from RPB1 and crosses the cleft near the catalytic site and is thought to promote translocation of Pol II by acting as a ratchet that moves the RNA-DNA hybrid through the active site by switching from straight to bent conformations at each step of nucleotide addition. During transcription elongation, Pol II moves on the template as the transcript elongates. Elongation is influenced by the phosphorylation status of the C-terminal domain (CTD) of Pol II largest subunit (RPB1), which serves as a platform for assembly of factors that regulate transcription initiation, elongation, termination and mRNA processing. The sequence is that of DNA-directed RNA polymerase II subunit rpb1 (rpb1) from Schizosaccharomyces pombe (strain 972 / ATCC 24843) (Fission yeast).